The sequence spans 915 residues: Pentatricopeptide repeat-containing protein At5g65560 (915 aa).

PPR repeat units lie at residues 182–216 (IIGC…KVCP), 217–251 (NIYT…GLDP), 252–286 (DFFT…GCRR), 287–321 (NEVA…ECFP), 322–356 (TVRT…GIKP), 357–391 (NIHT…GLMP), 392–426 (NVIT…KLSP), 427–460 (NTRT…KVLP), 461–495 (DVVT…GLVP), 496–530 (DQWT…GVNP), 531–565 (NVVM…NCLP), 566–600 (NSLT…GLQP), 601–635 (TVST…GTKP), 636–670 (DAHT…GVSP), 671–705 (DLFT…GCEP), 724–758 (KQKG…SVTP), 759–794 (NAKS…GISP), 795–829 (SELV…GHLP), 830–864 (QLES…GYYE), and 865–899 (DELA…GCKF).

It belongs to the PPR family. P subfamily.

This Arabidopsis thaliana (Mouse-ear cress) protein is Pentatricopeptide repeat-containing protein At5g65560.